A 235-amino-acid chain; its full sequence is 1-Cys peroxiredoxin (235 aa).

In terms of domain architecture, Thioredoxin spans 5 to 179; it reads ILLGDKFPDF…ILRVVDSLQL (175 aa). C49 is a catalytic residue. Catalysis depends on C49, which acts as the Cysteine sulfenic acid (-SOH) intermediate.

This sequence belongs to the peroxiredoxin family. Prx6 subfamily.

It is found in the cytoplasm. The enzyme catalyses a hydroperoxide + [protein]-dithiol = [protein]-disulfide + an alcohol + H2O. Thiol-specific peroxidase that catalyzes the reduction of hydrogen peroxide and organic hydroperoxides to water and alcohols, respectively. Plays a role in cell protection against oxidative stress by detoxifying peroxides. The chain is 1-Cys peroxiredoxin from Dirofilaria immitis (Canine heartworm).